The following is a 125-amino-acid chain: Protein ApaG (125 aa).

One can recognise an ApaG domain in the interval 1–125; that stretch reads MFTSSKVAIQ…FRLAIPTLIN (125 aa).

The chain is Protein ApaG from Proteus mirabilis (strain HI4320).